A 611-amino-acid chain; its full sequence is Threonine--tRNA ligase (611 aa).

Positions Asp-209–Pro-502 are catalytic. Zn(2+)-binding residues include Cys-302, His-353, and His-479.

This sequence belongs to the class-II aminoacyl-tRNA synthetase family. In terms of assembly, homodimer. Zn(2+) serves as cofactor.

It is found in the cytoplasm. The catalysed reaction is tRNA(Thr) + L-threonine + ATP = L-threonyl-tRNA(Thr) + AMP + diphosphate + H(+). Its function is as follows. Catalyzes the attachment of threonine to tRNA(Thr) in a two-step reaction: L-threonine is first activated by ATP to form Thr-AMP and then transferred to the acceptor end of tRNA(Thr). Also edits incorrectly charged L-seryl-tRNA(Thr). This chain is Threonine--tRNA ligase, found in Synechococcus sp. (strain CC9902).